The sequence spans 144 residues: MTSVFKDSRRDLRERAFQTLFSLETGGEFIDAAHFAYGYDKTVSEDKVLEVPIFLLNLVNGVVDHKDELDTLISSHLKSGWSLERLTLVDKSLLRLGLYEIKYFDETPDRVALNEIIEIAKKYSDETSAKFVNGLLSQFITNEN.

Belongs to the NusB family.

In terms of biological role, involved in transcription antitermination. Required for transcription of ribosomal RNA (rRNA) genes. Binds specifically to the boxA antiterminator sequence of the ribosomal RNA (rrn) operons. The polypeptide is Transcription antitermination protein NusB (Streptococcus agalactiae serotype Ia (strain ATCC 27591 / A909 / CDC SS700)).